The primary structure comprises 140 residues: Ribosome-binding factor A (140 aa).

The tract at residues arginine 116–serine 140 is disordered.

This sequence belongs to the RbfA family. As to quaternary structure, monomer. Binds 30S ribosomal subunits, but not 50S ribosomal subunits or 70S ribosomes.

Its subcellular location is the cytoplasm. Its function is as follows. One of several proteins that assist in the late maturation steps of the functional core of the 30S ribosomal subunit. Associates with free 30S ribosomal subunits (but not with 30S subunits that are part of 70S ribosomes or polysomes). Required for efficient processing of 16S rRNA. May interact with the 5'-terminal helix region of 16S rRNA. The polypeptide is Ribosome-binding factor A (Synechococcus sp. (strain WH7803)).